Consider the following 83-residue polypeptide: Small ribosomal subunit protein bS20 (83 aa).

The segment covering 1-11 (MANHKSAAKRA) has biased composition (basic residues). The tract at residues 1–44 (MANHKSAAKRAKQSEARRLRNKSTRSSMNTAVKKVRTAKEAGTD) is disordered.

This sequence belongs to the bacterial ribosomal protein bS20 family.

Functionally, binds directly to 16S ribosomal RNA. This Desulforapulum autotrophicum (strain ATCC 43914 / DSM 3382 / VKM B-1955 / HRM2) (Desulfobacterium autotrophicum) protein is Small ribosomal subunit protein bS20.